The sequence spans 421 residues: MLKEEDKIFTNLHGQQSHDLKSSKKRGDWENTKALLDKGRDFIVEEVKKSGLRGRGGAGFSTGMKWSFMPKNLEKSCYLVVNADESEPGTCKDRDILRFEPHKLIEGCLLASFAIGANNCYIYIRGEFYNEASNIQRALDEAYKEGLIGKNSCGSGFDCNIYLHRGAGAYICGEETALLESLEGKKGMPRLKPPFPAGFGLYGCPTTINNVESIAVVPTILRRGASWFAGIGKPNNTGTKIFCISGHVNKPCNVEEAMGISLKELIEKYAGGVRGGWDNLKAIIPGGSSVPLLPKSLCEVDMDFDSLRTAGSGLGTGGIIVMDQSTDIIYAIARLSKFYMHESCGQCTPCREGTGWMWRVMMRLVKGNVKKSEIDELLNVTKEIEGHTICALGDAAAWPIQGLIRHFRSEIEARIKSDSVV.

54 to 63 (GRGGAGFSTG) contributes to the NAD(+) binding site. 166-213 (GAGAYICGEETALLESLEGKKGMPRLKPPFPAGFGLYGCPTTINNVES) lines the FMN pocket. [4Fe-4S] cluster-binding residues include Cys-344, Cys-347, Cys-350, and Cys-390.

This sequence belongs to the complex I 51 kDa subunit family. FMN serves as cofactor. Requires [4Fe-4S] cluster as cofactor.

The catalysed reaction is a quinone + NADH + 5 H(+)(in) = a quinol + NAD(+) + 4 H(+)(out). NDH-1 shuttles electrons from NADH, via FMN and iron-sulfur (Fe-S) centers, to quinones in the respiratory chain. Couples the redox reaction to proton translocation (for every two electrons transferred, four hydrogen ions are translocated across the cytoplasmic membrane), and thus conserves the redox energy in a proton gradient. The polypeptide is NADH-quinone oxidoreductase subunit F (nuoF) (Rickettsia conorii (strain ATCC VR-613 / Malish 7)).